A 181-amino-acid polypeptide reads, in one-letter code: Isopentenyl-diphosphate Delta-isomerase (181 aa).

The Mn(2+) site is built by H24 and H30. The 141-residue stretch at 28–168 (LLHLAFSVLL…PDTFSVWFPT (141 aa)) folds into the Nudix hydrolase domain. C68 is an active-site residue. C68 contacts Mg(2+). Mn(2+) is bound at residue H70. E88 is a Mg(2+) binding site. Mn(2+) is bound by residues E117 and E119. E119 is an active-site residue.

Belongs to the IPP isomerase type 1 family. It depends on Mg(2+) as a cofactor. The cofactor is Mn(2+).

It is found in the cytoplasm. The enzyme catalyses isopentenyl diphosphate = dimethylallyl diphosphate. The protein operates within isoprenoid biosynthesis; dimethylallyl diphosphate biosynthesis; dimethylallyl diphosphate from isopentenyl diphosphate: step 1/1. Catalyzes the 1,3-allylic rearrangement of the homoallylic substrate isopentenyl (IPP) to its highly electrophilic allylic isomer, dimethylallyl diphosphate (DMAPP). The polypeptide is Isopentenyl-diphosphate Delta-isomerase (Aliivibrio fischeri (strain ATCC 700601 / ES114) (Vibrio fischeri)).